The following is a 71-amino-acid chain: Conotoxin Bu24 (71 aa).

Positions 1–21 (MGMRMMVTVFLLVVLATTVVS) are cleaved as a signal peptide. Positions 22 to 44 (LRSNRASDGRRGIVNKLNDLVPK) are excised as a propeptide. Asparagine amide is present on Asn70.

This sequence belongs to the conotoxin A superfamily. Contains 3 disulfide bonds. They are not indicated here, since framework IV presents two different connectivities (I-V, II-III, IV-VI and I-III, II-V, IV-VI). In terms of tissue distribution, expressed by the venom duct.

The protein localises to the secreted. This Conus bullatus (Bubble cone) protein is Conotoxin Bu24.